We begin with the raw amino-acid sequence, 323 residues long: Aspartate carbamoyltransferase catalytic subunit (323 aa).

Residues Arg68 and Thr69 each contribute to the carbamoyl phosphate site. L-aspartate is bound at residue Lys96. Arg118, His148, and Gln151 together coordinate carbamoyl phosphate. L-aspartate-binding residues include Arg181 and Arg236. Carbamoyl phosphate is bound by residues Gly277 and Pro278.

The protein belongs to the aspartate/ornithine carbamoyltransferase superfamily. ATCase family. As to quaternary structure, heterododecamer (2C3:3R2) of six catalytic PyrB chains organized as two trimers (C3), and six regulatory PyrI chains organized as three dimers (R2).

The enzyme catalyses carbamoyl phosphate + L-aspartate = N-carbamoyl-L-aspartate + phosphate + H(+). Its pathway is pyrimidine metabolism; UMP biosynthesis via de novo pathway; (S)-dihydroorotate from bicarbonate: step 2/3. In terms of biological role, catalyzes the condensation of carbamoyl phosphate and aspartate to form carbamoyl aspartate and inorganic phosphate, the committed step in the de novo pyrimidine nucleotide biosynthesis pathway. This chain is Aspartate carbamoyltransferase catalytic subunit, found in Verminephrobacter eiseniae (strain EF01-2).